Reading from the N-terminus, the 454-residue chain is Glutamyl-tRNA reductase (454 aa).

Substrate is bound by residues 50–53 (TCNR), Ser103, 108–110 (EDQ), and Gln114. Cys51 serves as the catalytic Nucleophile. An NADP(+)-binding site is contributed by 182 to 187 (GAGEMG). Residues 407–454 (LFDPNFGGDTPQPDRPDDIPRAAERGDISGDDLPDDVPNHIAEKVSDG) are disordered. Composition is skewed to basic and acidic residues over residues 418-434 (QPDR…RGDI) and 443-454 (VPNHIAEKVSDG).

The protein belongs to the glutamyl-tRNA reductase family. Homodimer.

It carries out the reaction (S)-4-amino-5-oxopentanoate + tRNA(Glu) + NADP(+) = L-glutamyl-tRNA(Glu) + NADPH + H(+). It functions in the pathway porphyrin-containing compound metabolism; protoporphyrin-IX biosynthesis; 5-aminolevulinate from L-glutamyl-tRNA(Glu): step 1/2. In terms of biological role, catalyzes the NADPH-dependent reduction of glutamyl-tRNA(Glu) to glutamate 1-semialdehyde (GSA). This is Glutamyl-tRNA reductase from Haloquadratum walsbyi (strain DSM 16790 / HBSQ001).